We begin with the raw amino-acid sequence, 101 residues long: Small ribosomal subunit protein uS14 (101 aa).

Belongs to the universal ribosomal protein uS14 family. In terms of assembly, part of the 30S ribosomal subunit. Contacts proteins S3 and S10.

Functionally, binds 16S rRNA, required for the assembly of 30S particles and may also be responsible for determining the conformation of the 16S rRNA at the A site. The chain is Small ribosomal subunit protein uS14 from Shewanella oneidensis (strain ATCC 700550 / JCM 31522 / CIP 106686 / LMG 19005 / NCIMB 14063 / MR-1).